We begin with the raw amino-acid sequence, 466 residues long: MQKSYDYDAIVIGSGPGGEGAAMGLVKQGARIAVIERYHNIGGGCTHWGTIPSKALRHAVSRIIEFNQNPLYSDHTRLLRSSFADILNHTENVVSQQTHMRQGFYERNHCEIFQGDARFIDANTLEIETHDGSIERLTAEKFVIACGSRPYHPPDVDFTHPRIYDSDSILNLHHEPGHVIIYGAGVIGCEYASIFRGLAVKVDLINTRDRLLAFLDQEMSDSLSYHFWNNGVVIRHNEEFEKVEGVADGVIMHLKSGKKLKADCLLYANGRTGNTDSLSLENVGLEADGRGLLKVNSMYQTAQPNIYAVGDVIGYPSLASAAYDQGRIAAQAMIKGEATAHLIEDIPTGIYTIPEISSVGKTEQQLTAMKVPYEVGRAQFKHLARAQIVGMNVGSLKILFHRETKEILGIHCFGERAAEIIHIGQAIMEQKNGGNTIEYFVNTTFNYPTMAEAYRVAALNGLNRLF.

Residue 36-45 coordinates FAD; sequence ERYHNIGGGC.

The protein belongs to the class-I pyridine nucleotide-disulfide oxidoreductase family. FAD serves as cofactor.

It localises to the cytoplasm. It carries out the reaction NAD(+) + NADPH = NADH + NADP(+). Functionally, conversion of NADPH, generated by peripheral catabolic pathways, to NADH, which can enter the respiratory chain for energy generation. The sequence is that of Soluble pyridine nucleotide transhydrogenase from Erwinia tasmaniensis (strain DSM 17950 / CFBP 7177 / CIP 109463 / NCPPB 4357 / Et1/99).